We begin with the raw amino-acid sequence, 219 residues long: Cytidylate kinase (219 aa).

Position 21–29 (21–29 (GPAASGKGT)) interacts with ATP.

The protein belongs to the cytidylate kinase family. Type 1 subfamily.

The protein resides in the cytoplasm. It catalyses the reaction CMP + ATP = CDP + ADP. The catalysed reaction is dCMP + ATP = dCDP + ADP. The sequence is that of Cytidylate kinase from Rickettsia akari (strain Hartford).